Here is a 434-residue protein sequence, read N- to C-terminus: Alpha-enolase (434 aa).

A Mg(2+)-binding site is contributed by S40. Residues H158 and E167 each coordinate substrate. E210 acts as the Proton donor in catalysis. Positions 245, 293, and 318 each coordinate Mg(2+). Residues E293, D318, 370-373 (SHRS), and K394 each bind substrate.

This sequence belongs to the enolase family. In terms of assembly, homodimer. Requires Mg(2+) as cofactor.

Its subcellular location is the cytoplasm. It catalyses the reaction (2R)-2-phosphoglycerate = phosphoenolpyruvate + H2O. It participates in carbohydrate degradation; glycolysis; pyruvate from D-glyceraldehyde 3-phosphate: step 4/5. This chain is Alpha-enolase, found in Trachemys scripta elegans (Red-eared slider turtle).